The primary structure comprises 178 residues: CASP-like protein 5A1 (178 aa).

The segment at 1–24 is disordered; sequence MFASRPAVHPVEAPPPTDPVEQPT. Topologically, residues 1-37 are cytoplasmic; that stretch reads MFASRPAVHPVEAPPPTDPVEQPTGVLMKDLPGMPGT. The chain crosses the membrane as a helical span at residues 38-58; that stretch reads AGGLGLRVAQFVFAGVALAVM. Over 59 to 69 the chain is Extracellular; the sequence is ASTSDFPSVTA. A helical transmembrane segment spans residues 70–90; it reads FCYLVAATIMQCLWSFSLAIV. The Cytoplasmic segment spans residues 91 to 105; sequence DIYALLVKRCLRNRR. Residues 106-126 traverse the membrane as a helical segment; the sequence is AVCLFAIGDGITAALTFGAAC. At 127-152 the chain is on the extracellular side; the sequence is SSAGITVLIDNDLNICAENHCGSFKT. Residues 153–173 form a helical membrane-spanning segment; that stretch reads ATALAFMSWFALTPSFLLNFW. Over 174-178 the chain is Cytoplasmic; the sequence is SMAAR.

The protein belongs to the Casparian strip membrane proteins (CASP) family. Homodimer and heterodimers.

It localises to the cell membrane. The chain is CASP-like protein 5A1 from Brachypodium distachyon (Purple false brome).